Reading from the N-terminus, the 250-residue chain is tRNA (guanine-N(1)-)-methyltransferase (250 aa).

S-adenosyl-L-methionine is bound by residues glycine 116 and isoleucine 136–leucine 141.

This sequence belongs to the RNA methyltransferase TrmD family. Homodimer.

The protein localises to the cytoplasm. The enzyme catalyses guanosine(37) in tRNA + S-adenosyl-L-methionine = N(1)-methylguanosine(37) in tRNA + S-adenosyl-L-homocysteine + H(+). Functionally, specifically methylates guanosine-37 in various tRNAs. The chain is tRNA (guanine-N(1)-)-methyltransferase from Pseudomonas entomophila (strain L48).